A 602-amino-acid chain; its full sequence is Potassium voltage-gated channel subfamily A member 5 (602 aa).

The segment at 1–107 (MEISLVPMEN…EDQAPQDSGS (107 aa)) is disordered. The segment at 1-202 (MEISLVPMEN…FYQLGDEAME (202 aa)) is tetramerization domain. Residues 1-238 (MEISLVPMEN…LIFEYPESSG (238 aa)) are Cytoplasmic-facing. Residues 66-78 (PLPPMPQELPQPR) show a composition bias toward pro residues. Phosphoserine; by CK2 and PKA is present on S81. K212 is covalently cross-linked (Glycyl lysine isopeptide (Lys-Gly) (interchain with G-Cter in SUMO)). Residues 239–260 (SARAIAIVSVLVILISIITFCL) form a helical membrane-spanning segment. Over 261–314 (ETLPEFRDERELLRHPPVPPQPPAPAPGANGSGSGVLSSGPTVAPLLPRTLADP) the chain is Extracellular. Residues 274-297 (RHPPVPPQPPAPAPGANGSGSGVL) form a disordered region. A compositionally biased stretch (pro residues) spans 276–286 (PPVPPQPPAPA). N-linked (GlcNAc...) asparagine glycosylation is present at N290. The chain crosses the membrane as a helical span at residues 315–336 (FFIVETTCVIWFTFELLVRFFA). C337 carries the S-palmitoyl cysteine lipid modification. Residues 337 to 347 (CPSKAEFSRNI) lie on the Cytoplasmic side of the membrane. A helical transmembrane segment spans residues 348-368 (MNIIDIVAIFPYFITLGTELA). The Extracellular segment spans residues 369-384 (EQQPGGGGQNGQQAMS). Residues 385–405 (LAILRVIRLVRVFRIFKLSRH) form a helical; Voltage-sensor membrane-spanning segment. Residues 406 to 420 (SKGLQILGKTLQASM) lie on the Cytoplasmic side of the membrane. The interval 407–420 (KGLQILGKTLQASM) is S4-S5 linker. Residues 421 to 442 (RELGLLIFFLFIGVILFSSAVY) form a helical membrane-spanning segment. Residues 443 to 456 (FAEADNQGSHFSSI) are Extracellular-facing. Residues 457–468 (PDAFWWAVVTMT) constitute an intramembrane region (helical). The short motif at 469–474 (TVGYGD) is the Selectivity filter element. An intramembrane segment occupies 469-476 (TVGYGDMR). The Extracellular segment spans residues 477–483 (PITVGGK). A helical transmembrane segment spans residues 484–512 (IVGSLCAIAGVLTIALPVPVIVSNFNYFY). Topologically, residues 513–602 (HRETDHEEQA…CLDTSRETDL (90 aa)) are cytoplasmic. Residue K525 forms a Glycyl lysine isopeptide (Lys-Gly) (interchain with G-Cter in SUMO) linkage. Phosphoserine; by PKA is present on residues S535, S546, and S569. The PDZ-binding motif lies at 600–602 (TDL).

Belongs to the potassium channel family. A (Shaker) (TC 1.A.1.2) subfamily. Kv1.5/KCNA5 sub-subfamily. As to quaternary structure, homotetramer and heterotetramer of potassium channel proteins. Interacts with DLG1, which enhances channel currents. Forms a ternary complex with DLG1 and CAV3. Interacts with KCNAB1. Interacts with UBE2I. Interacts with XIRP2; the interaction is required for normal action potential configuration in the heart. Glycosylated. Post-translationally, sumoylated on Lys-212, and Lys-525, preferentially with SUMO3. Sumoylation regulates the voltage sensitivity of the channel. Expressed in the heart (at protein level). Expressed in the brain and weakly expressed in the thymus, skeletal muscle and spleen.

The protein localises to the cell membrane. It carries out the reaction K(+)(in) = K(+)(out). Its function is as follows. Voltage-gated potassium channel that mediates transmembrane potassium transport in excitable membranes. Forms tetrameric potassium-selective channels through which potassium ions pass in accordance with their electrochemical gradient. The channel alternates between opened and closed conformations in response to the voltage difference across the membrane. Can form functional homotetrameric channels and heterotetrameric channels that contain variable proportions of KCNA1, KCNA2, KCNA4, KCNA5, and possibly other family members as well; channel properties depend on the type of alpha subunits that are part of the channel. Channel properties are modulated by cytoplasmic beta subunits that regulate the subcellular location of the alpha subunits and promote rapid inactivation. Homotetrameric channels display rapid activation and slow inactivation. Required for normal electrical conduction including formation of the infranodal ventricular conduction system and normal action potential configuration, as a result of its interaction with XIRP2. May play a role in regulating the secretion of insulin in normal pancreatic islets. Voltage-gated potassium channel that mediates transmembrane potassium transport in excitable membranes. Forms tetrameric potassium-selective channels through which potassium ions pass in accordance with their electrochemical gradient. The channel alternates between opened and closed conformations in response to the voltage difference across the membrane. In terms of biological role, inactive. Inhibits expression of isoform 1 and isoform 2. The protein is Potassium voltage-gated channel subfamily A member 5 (Kcna5) of Mus musculus (Mouse).